Reading from the N-terminus, the 390-residue chain is cAMP-dependent protein kinase regulatory subunit (390 aa).

Positions 1-17 are enriched in polar residues; the sequence is MSASGFTSPFGANSNPF. The disordered stretch occupies residues 1-81; it reads MSASGFTSPF…RPQNPDGYPA (81 aa). The interval 1–129 is dimerization and phosphorylation; the sequence is MSASGFTSPF…RLKKAIQGNF (129 aa). A Phosphoserine modification is found at Ser90. Residues 130–261, Glu208, Arg217, 262–383, Glu329, and Arg338 contribute to the 3',5'-cyclic AMP site; these read LFSH…EEVP and ILST…GVEE.

It belongs to the cAMP-dependent kinase regulatory chain family. Tetramer, composed of 2 regulatory (R) and 2 catalytic (C) subunits. In the presence of cAMP it dissociates into 2 active monomeric C subunits and an R dimer.

This is cAMP-dependent protein kinase regulatory subunit (SUM1) from Pyricularia oryzae (strain 70-15 / ATCC MYA-4617 / FGSC 8958) (Rice blast fungus).